The chain runs to 336 residues: L-Ala-D/L-amino acid epimerase (336 aa).

Substrate contacts are provided by residues T130 and 152-154 (KIK). D178, E204, and D229 together coordinate Mg(2+). Substrate-binding positions include K251 and 301 to 303 (DMD).

Belongs to the mandelate racemase/muconate lactonizing enzyme family. The cofactor is Mg(2+).

In terms of biological role, catalyzes the epimerization of D-Ala-D-Ala to D-Ala-L-Ala. Has broad substrate specificity and catalyzes the epimerization of a variety of dipeptides containing an N-terminal Ala followed by Ser, Thr, Val, Met, His, Phe or Trp (in vitro). The protein is L-Ala-D/L-amino acid epimerase of Flavobacterium johnsoniae (strain ATCC 17061 / DSM 2064 / JCM 8514 / BCRC 14874 / CCUG 350202 / NBRC 14942 / NCIMB 11054 / UW101) (Cytophaga johnsonae).